The following is a 344-amino-acid chain: Dihydroorotase (344 aa).

Zn(2+)-binding residues include histidine 14 and histidine 16. Substrate-binding positions include 16–18 and asparagine 42; that span reads HLR. Residues lysine 100, histidine 137, and histidine 175 each contribute to the Zn(2+) site. Residue lysine 100 is modified to N6-carboxylysine. Histidine 137 serves as a coordination point for substrate. Leucine 220 contributes to the substrate binding site. Aspartate 248 lines the Zn(2+) pocket. The active site involves aspartate 248. Positions 252 and 264 each coordinate substrate.

Belongs to the metallo-dependent hydrolases superfamily. DHOase family. Class II DHOase subfamily. As to quaternary structure, homodimer. The cofactor is Zn(2+).

The enzyme catalyses (S)-dihydroorotate + H2O = N-carbamoyl-L-aspartate + H(+). Its pathway is pyrimidine metabolism; UMP biosynthesis via de novo pathway; (S)-dihydroorotate from bicarbonate: step 3/3. Functionally, catalyzes the reversible cyclization of carbamoyl aspartate to dihydroorotate. This is Dihydroorotase from Roseobacter denitrificans (strain ATCC 33942 / OCh 114) (Erythrobacter sp. (strain OCh 114)).